Consider the following 476-residue polypeptide: Lactate utilization protein B (476 aa).

4Fe-4S ferredoxin-type domains lie at 304 to 334 and 353 to 382; these read GGEF…GHTY and YDDF…LHQL. Residues cysteine 313, cysteine 316, cysteine 319, cysteine 323, cysteine 366, cysteine 369, and cysteine 373 each contribute to the [4Fe-4S] cluster site. The tract at residues 452 to 476 is disordered; sequence RDFPAPNKNSFRNWMKHRTKGDEES.

The protein belongs to the LutB/YkgF family.

In terms of biological role, is involved in L-lactate degradation and allows cells to grow with lactate as the sole carbon source. Has probably a role as an electron transporter during oxidation of L-lactate. This chain is Lactate utilization protein B, found in Lysinibacillus sphaericus (strain C3-41).